We begin with the raw amino-acid sequence, 350 residues long: Outer membrane protein A (350 aa).

A signal peptide spans M1–A21. Transmembrane regions (beta stranded) follow at residues T27–S37, Q59–V70, L74–W82, Q100–P111, L116–G124, P146–A155, I160–Q167, and M186–R194. 4 tandem repeats follow at residues A205–P206, A207–P208, A209–P210, and A211–P212. Residues A205–P212 are 4 X 2 AA tandem repeats of A-P. In terms of domain architecture, OmpA-like spans V214 to K342. An intrachain disulfide couples C315 to C327.

The protein belongs to the outer membrane OOP (TC 1.B.6) superfamily. OmpA family. In terms of assembly, monomer and homodimer.

The protein resides in the cell outer membrane. Functionally, with TolR probably plays a role in maintaining the position of the peptidoglycan cell wall in the periplasm. Acts as a porin with low permeability that allows slow penetration of small solutes; an internal gate slows down solute passage. Its function is as follows. Required for conjugation with F-type plasmids; probably serves as the mating receptor on recipient cells. This is Outer membrane protein A from Klebsiella aerogenes (Enterobacter aerogenes).